The primary structure comprises 386 residues: Paralemmin-1 (386 aa).

The stretch at 4 to 115 (VEANTLQQER…TKENLAEAAA (112 aa)) forms a coiled coil. Disordered regions lie at residues 21–40 (RKRQ…DRRQ), 51–149 (ERWL…PMKA), 240–290 (EATA…TMIF), and 321–378 (DAES…AKKQ). Composition is skewed to basic and acidic residues over residues 24–40 (QTEI…DRRQ) and 68–95 (AMKK…RELE). Positions 97–116 (LENSSSVTSTKENLAEAAAP) are enriched in low complexity. Basic and acidic residues-rich tracts occupy residues 259–282 (PRRE…EPSR), 322–334 (AESK…KDHA), and 365–377 (EAKE…DAKK). S-palmitoyl cysteine attachment occurs at residues Cys380 and Cys382. The residue at position 383 (Cys383) is a Cysteine methyl ester. The S-farnesyl cysteine moiety is linked to residue Cys383. Residues 384–386 (TVM) constitute a propeptide, removed in mature form.

The protein belongs to the paralemmin family. Interacts with dopamine receptor DRD3. Phosphorylated. In terms of tissue distribution, expressed in the lens (at protein level). Highly expressed in forebrain and cerebellum with lower expression in adrenal gland and heart. Expression weak or undetectable in other tissues.

It localises to the cell membrane. The protein resides in the cell projection. It is found in the filopodium membrane. The protein localises to the axon. Its subcellular location is the dendrite. It localises to the dendritic spine. The protein resides in the basolateral cell membrane. It is found in the apicolateral cell membrane. In terms of biological role, involved in plasma membrane dynamics and cell process formation. Isoform 1 and isoform 2 are necessary for axonal and dendritic filopodia induction, for dendritic spine maturation and synapse formation in a palmitoylation-dependent manner. In Gallus gallus (Chicken), this protein is Paralemmin-1 (PALM).